Reading from the N-terminus, the 192-residue chain is Adenylate kinase (192 aa).

Gly-10–Thr-18 is a binding site for ATP.

It belongs to the archaeal adenylate kinase family. Monomer.

Its subcellular location is the cytoplasm. It catalyses the reaction AMP + ATP = 2 ADP. This is Adenylate kinase from Methanococcus maripaludis (strain C5 / ATCC BAA-1333).